The sequence spans 235 residues: uncharacterized protein (235 aa).

Disordered regions lie at residues 1–47 (MSHK…QSTN) and 78–128 (QEHH…KQPQ). Residues 20 to 33 (HPPGQSLSSISWSP) show a composition bias toward polar residues. Over residues 84–98 (QQQQQQRQNIRSQNS) the composition is skewed to low complexity. Positions 106-128 (VQESQWTSSASNSSLKKQEKQPQ) are enriched in polar residues.

This is an uncharacterized protein from Saccharomyces cerevisiae (strain ATCC 204508 / S288c) (Baker's yeast).